Reading from the N-terminus, the 698-residue chain is Polyribonucleotide nucleotidyltransferase (698 aa).

2 residues coordinate Mg(2+): D485 and D491. The KH domain maps to 552-611 (PRITTIKINPEKIRDVIGKGGAVIRALTEETGTTIELDDDGTVKIASSNGEATKEAIRRI). One can recognise an S1 motif domain in the interval 621 to 689 (GRVYNGKVIR…RQGRVRLSIK (69 aa)).

The protein belongs to the polyribonucleotide nucleotidyltransferase family. As to quaternary structure, component of the RNA degradosome, which is a multiprotein complex involved in RNA processing and mRNA degradation. The cofactor is Mg(2+).

It is found in the cytoplasm. It carries out the reaction RNA(n+1) + phosphate = RNA(n) + a ribonucleoside 5'-diphosphate. Its function is as follows. Involved in mRNA degradation. Catalyzes the phosphorolysis of single-stranded polyribonucleotides processively in the 3'- to 5'-direction. In Shewanella denitrificans (strain OS217 / ATCC BAA-1090 / DSM 15013), this protein is Polyribonucleotide nucleotidyltransferase.